The sequence spans 386 residues: FHA domain-containing protein At4g14490 (386 aa).

The FHA domain maps to 28 to 78; the sequence is IRVGRIVRGNEIAIKDAGISTKHLRIESDSGNWVIQDLGSSNGTLLNSNAL. The tract at residues 286-311 is disordered; sequence KNKGKNKKADQKPLKSFENDEVTDSG. A compositionally biased stretch (basic and acidic residues) spans 292–303; sequence KKADQKPLKSFE.

The sequence is that of FHA domain-containing protein At4g14490 from Arabidopsis thaliana (Mouse-ear cress).